Here is a 270-residue protein sequence, read N- to C-terminus: Type III pantothenate kinase (270 aa).

6–13 (DAGNTNIV) is a binding site for ATP. 107 to 110 (GADR) serves as a coordination point for substrate. Asp-109 serves as the catalytic Proton acceptor. Asp-129 contributes to the K(+) binding site. An ATP-binding site is contributed by Thr-132. Thr-184 contributes to the substrate binding site.

This sequence belongs to the type III pantothenate kinase family. In terms of assembly, homodimer. The cofactor is NH4(+). K(+) is required as a cofactor.

The protein resides in the cytoplasm. It carries out the reaction (R)-pantothenate + ATP = (R)-4'-phosphopantothenate + ADP + H(+). The protein operates within cofactor biosynthesis; coenzyme A biosynthesis; CoA from (R)-pantothenate: step 1/5. Its function is as follows. Catalyzes the phosphorylation of pantothenate (Pan), the first step in CoA biosynthesis. In Gluconobacter oxydans (strain 621H) (Gluconobacter suboxydans), this protein is Type III pantothenate kinase.